A 577-amino-acid polypeptide reads, in one-letter code: Arginine--tRNA ligase (577 aa).

Residues 122 to 132 (PNVAKEMHVGH) carry the 'HIGH' region motif.

Belongs to the class-I aminoacyl-tRNA synthetase family. Monomer.

It is found in the cytoplasm. It catalyses the reaction tRNA(Arg) + L-arginine + ATP = L-arginyl-tRNA(Arg) + AMP + diphosphate. This Shigella flexneri protein is Arginine--tRNA ligase.